Here is a 119-residue protein sequence, read N- to C-terminus: Beta-2-microglobulin (119 aa).

A signal peptide spans 1–20 (MARFVVVPLFVLLSLFGLEA). Residues 25-114 (PKIQVYSRYP…VTFSTPKTVK (90 aa)) enclose the Ig-like C1-type domain. Residues C45 and C100 are joined by a disulfide bond.

It belongs to the beta-2-microglobulin family. As to quaternary structure, heterodimer of an alpha chain and a beta chain. Beta-2-microglobulin is the beta-chain of major histocompatibility complex class I molecules.

The protein localises to the secreted. Functionally, component of the class I major histocompatibility complex (MHC). Involved in the presentation of peptide antigens to the immune system. This is Beta-2-microglobulin (B2M) from Saguinus niger (Black tamarin).